The primary structure comprises 645 residues: ATP-dependent zinc metalloprotease FtsH 1 (645 aa).

At 1 to 6 (MRSTQK) the chain is on the cytoplasmic side. Residues 7 to 27 (TLALWFFLIIMAVFLFQAYES) traverse the membrane as a helical segment. The Periplasmic segment spans residues 28–110 (KQQKAIADFN…NYERADNGGF (83 aa)). Residues 111–131 (FQSLLVNWLPLILIVAMFLFI) traverse the membrane as a helical segment. Residues 132-645 (MRQIQAGGGK…PVGNTGPVTI (514 aa)) lie on the Cytoplasmic side of the membrane. Residue 203 to 210 (GSPGTGKT) participates in ATP binding. His425 is a Zn(2+) binding site. The active site involves Glu426. Residues His429 and Asp501 each contribute to the Zn(2+) site.

The protein in the central section; belongs to the AAA ATPase family. It in the C-terminal section; belongs to the peptidase M41 family. Homohexamer. The cofactor is Zn(2+).

It localises to the cell inner membrane. Acts as a processive, ATP-dependent zinc metallopeptidase for both cytoplasmic and membrane proteins. Plays a role in the quality control of integral membrane proteins. This is ATP-dependent zinc metalloprotease FtsH 1 from Bdellovibrio bacteriovorus (strain ATCC 15356 / DSM 50701 / NCIMB 9529 / HD100).